A 342-amino-acid polypeptide reads, in one-letter code: HTH-type transcriptional regulator GbpR (342 aa).

An HTH lysR-type domain is found at 16–73; it reads LKLRHLQLFVALDEHRNLHRAAASLTMSQPAASKLLGDLEESLGVTLFERHGRGVEPN. The segment at residues 33–52 is a DNA-binding region (H-T-H motif); the sequence is LHRAAASLTMSQPAASKLLG.

This sequence belongs to the LysR transcriptional regulatory family.

Its function is as follows. Does not seem to be required for sbpA expression. The protein is HTH-type transcriptional regulator GbpR (gbpR) of Azospirillum brasilense.